Consider the following 520-residue polypeptide: GMP synthase [glutamine-hydrolyzing] (520 aa).

The region spanning 9–202 is the Glutamine amidotransferase type-1 domain; the sequence is TVLIVDFGSQ…VHNIAGIEGD (194 aa). The active-site Nucleophile is Cys-86. Residues His-176 and Glu-178 contribute to the active site. One can recognise a GMPS ATP-PPase domain in the interval 203–395; sequence WTMRAYREHA…LGLPESFIGR (193 aa). 230–236 contributes to the ATP binding site; it reads SGGVDSS.

In terms of assembly, homodimer.

The enzyme catalyses XMP + L-glutamine + ATP + H2O = GMP + L-glutamate + AMP + diphosphate + 2 H(+). It functions in the pathway purine metabolism; GMP biosynthesis; GMP from XMP (L-Gln route): step 1/1. Its function is as follows. Catalyzes the synthesis of GMP from XMP. This is GMP synthase [glutamine-hydrolyzing] from Mesorhizobium japonicum (strain LMG 29417 / CECT 9101 / MAFF 303099) (Mesorhizobium loti (strain MAFF 303099)).